The sequence spans 460 residues: Ammonium transporter Rh type C (460 aa).

Topologically, residues 1-9 are cytoplasmic; sequence MAWNTNLRW. Residues 10 to 30 traverse the membrane as a helical segment; the sequence is RLPLTCLLLQVIMVILFGVFV. Residues 31–61 lie on the Extracellular side of the membrane; that stretch reads RYDPDADAHWIDERLGRNISSDMDNEFYYRY. Asparagine 48 carries an N-linked (GlcNAc...) asparagine glycan. The chain crosses the membrane as a helical span at residues 62-82; the sequence is PSFQDVHVMIFVGFGFLMTFL. Over 83-86 the chain is Cytoplasmic; the sequence is QRYG. Residues 87–107 form a helical membrane-spanning segment; sequence FSSVGFNFLLAAFGIQWALLM. At 108–125 the chain is on the extracellular side; it reads QGWLHSFHSGYIVLGVEN. Residues 126–145 traverse the membrane as a helical segment; it reads LINADFCVGSVCVAFGAVLG. At 146-151 the chain is on the cytoplasmic side; the sequence is KVSPVQ. Residues 152–174 form a helical membrane-spanning segment; that stretch reads LLIMTLFQVTLFSVNEFILLNLL. The Extracellular portion of the chain corresponds to 175–179; sequence EVKDA. A helical membrane pass occupies residues 180-200; sequence GGSMTIHTFGAYFGLTVTWIL. The Cytoplasmic portion of the chain corresponds to 201 to 219; the sequence is YRPNLYQSKERQSSVYHSD. A helical membrane pass occupies residues 220 to 240; it reads LFAMIGTLFLWMYWPSFNSAV. At 241 to 251 the chain is on the extracellular side; sequence SHHGDAQHRAA. Residues 252–272 form a helical membrane-spanning segment; the sequence is INTYCSLAACVLTSVALSSAL. Residues 273–285 are Cytoplasmic-facing; it reads HKKGKLDMVHIQN. Residues 286 to 306 traverse the membrane as a helical segment; that stretch reads ATLAGGVAVGTAAEMMLMPYG. A topological domain (extracellular) is located at residue serine 307. Residues 308–328 form a helical membrane-spanning segment; sequence LIVGFICGIISTLGFVYLTPF. Topologically, residues 329–340 are cytoplasmic; the sequence is LESRLRIQDTCG. Residues 341–361 traverse the membrane as a helical segment; sequence IHNLHGMPGIIGGIVGAVTAA. Topologically, residues 362–396 are extracellular; the sequence is SANTQQYGQKGLAHAFDIDATKTTWTASMQGSFQA. A helical membrane pass occupies residues 397–417; it reads AGLFVSLAMALVGGLIVGVIL. Topologically, residues 418 to 460 are cytoplasmic; that stretch reads KLPFWGQPADENCFEDAIYWEIPEDQKSLVSRSEDPTLRPTEP.

Belongs to the ammonium transporter (TC 2.A.49) family. Rh subfamily. In terms of assembly, homotrimer. N-glycosylated.

The protein localises to the cell membrane. It localises to the apical cell membrane. It catalyses the reaction NH4(+)(in) = NH4(+)(out). The enzyme catalyses methylamine(out) = methylamine(in). It carries out the reaction CO2(out) = CO2(in). Its function is as follows. Ammonium transporter involved in the maintenance of acid-base homeostasis. Transports ammonium and its related derivative methylammonium across the plasma membrane of epithelial cells likely contributing to renal transepithelial ammonia transport and ammonia metabolism. Postulated to primarily mediate an electroneutral bidirectional transport of NH3 ammonia species according to a mechanism that implies interaction of an NH4(+) ion with acidic residues of the pore entry followed by dissociation of NH4(+) into NH3 and H(+). As a result NH3 transits through the central pore and is protonated on the extracellular side reforming NH4(+). May act as a CO2 channel providing for renal acid secretion. The sequence is that of Ammonium transporter Rh type C (RHCG) from Sus scrofa (Pig).